The chain runs to 474 residues: Cbb3-type cytochrome c oxidase subunit CcoN1 (474 aa).

Topologically, residues 1-16 (MNTATSTAYSYKVVRQ) are cytoplasmic. Residues 17 to 37 (FAIMTVVWGIVGMGLGVFIAA) traverse the membrane as a helical segment. Residues 38 to 60 (QLAWPFLNFDLPWTSFGRLRPLH) lie on the Periplasmic side of the membrane. His60 contributes to the heme b binding site. The helical transmembrane segment at 61–81 (TNAVIFAFGGCALFATSYYSV) threads the bilayer. The Cytoplasmic segment spans residues 82 to 96 (QRTCQTTLFAPKLAA). A helical membrane pass occupies residues 97-117 (FTFWGWQLVILLAAISLPLGF). The Periplasmic segment spans residues 118 to 129 (TSSKEYAELEWP). A helical transmembrane segment spans residues 130–150 (IDILITIVWVAYAVVFFGTLA). At 151–156 (KRKVKH) the chain is on the cytoplasmic side. A helical membrane pass occupies residues 157–177 (IYVGNWFFGAFILTVAILHVV). Residues 178-205 (NNLEIPVTAMKSYSLYAGATDAMVQWWY) are Periplasmic-facing. The chain crosses the membrane as a helical span at residues 206-226 (GHNAVGFFLTAGFLGIMYYFV). His207 lines the Cu cation pocket. The Cytoplasmic portion of the chain corresponds to 227–238 (PKQAERPVYSYR). Residues 239–259 (LSIVHFWALITVYIWAGPHHL) form a helical membrane-spanning segment. Cu cation contacts are provided by His257 and His258. Topologically, residues 260–270 (HYTALPDWAQS) are periplasmic. Residues 271–291 (LGMVMSLILLAPSWGGMINGM) form a helical membrane-spanning segment. The Cytoplasmic portion of the chain corresponds to 292-308 (MTLSGAWHKLRSDPILR). A helical membrane pass occupies residues 309–329 (FLVVSLAFYGMSTFEGPMMAI). Residues 330-345 (KTVNALSHYTDWTIGH) lie on the Periplasmic side of the membrane. Heme b is bound by residues His345 and His347. Residues 346-366 (VHAGALGWVAMVSIGALYHLV) traverse the membrane as a helical segment. Residues 367 to 384 (PKVFGREQMHSIGLINTH) are Cytoplasmic-facing. Residues 385–405 (FWLATIGTVLYIASMWVNGIA) traverse the membrane as a helical segment. The Periplasmic segment spans residues 406-432 (QGLMWRAINDDGTLTYSFVESLEASHP). Residues 433 to 453 (GFVVRMIGGAIFFAGMLVMAY) traverse the membrane as a helical segment. Residues 454 to 474 (NTWRTVQAAKPAEYDAAAQIA) lie on the Cytoplasmic side of the membrane.

Belongs to the heme-copper respiratory oxidase family. Component of the cbb3-type cytochrome c oxidase at least composed of CcoN, CcoO, CcoQ and CcoP. Requires Cu(2+) as cofactor. Heme b serves as cofactor.

The protein resides in the cell inner membrane. It catalyses the reaction 4 Fe(II)-[cytochrome c] + O2 + 8 H(+)(in) = 4 Fe(III)-[cytochrome c] + 2 H2O + 4 H(+)(out). It participates in energy metabolism; oxidative phosphorylation. Its function is as follows. Cbb3-type cytochrome c oxidase is the component of the respiratory chain that catalyzes the reduction of oxygen to water. Subunits CcoN and CcoO form the functional core of the enzyme complex. Subunits CcoP and CcoQ may optionally bind to the core. CcoN is the catalytic subunit of the enzyme. Electrons originating in cytochrome c or a quinol are transferred to the bimetallic center formed by a high-spin heme and copper B. The complex also functions as a proton pump. The protein is Cbb3-type cytochrome c oxidase subunit CcoN1 of Stutzerimonas stutzeri (Pseudomonas stutzeri).